Here is a 165-residue protein sequence, read N- to C-terminus: Chorismate pyruvate-lyase (165 aa).

Substrate is bound by residues Met35, Arg77, Leu115, and Glu156.

Belongs to the UbiC family. Monomer.

The protein resides in the cytoplasm. The catalysed reaction is chorismate = 4-hydroxybenzoate + pyruvate. Its pathway is cofactor biosynthesis; ubiquinone biosynthesis. Removes the pyruvyl group from chorismate, with concomitant aromatization of the ring, to provide 4-hydroxybenzoate (4HB) for the ubiquinone pathway. This Escherichia coli O157:H7 protein is Chorismate pyruvate-lyase.